Reading from the N-terminus, the 1368-residue chain is DNA-directed RNA polymerase subunit beta (1368 aa).

This sequence belongs to the RNA polymerase beta chain family. The RNAP catalytic core consists of 2 alpha, 1 beta, 1 beta' and 1 omega subunit. When a sigma factor is associated with the core the holoenzyme is formed, which can initiate transcription.

The enzyme catalyses RNA(n) + a ribonucleoside 5'-triphosphate = RNA(n+1) + diphosphate. Its function is as follows. DNA-dependent RNA polymerase catalyzes the transcription of DNA into RNA using the four ribonucleoside triphosphates as substrates. This is DNA-directed RNA polymerase subunit beta from Burkholderia cenocepacia (strain HI2424).